The sequence spans 439 residues: Fibroleukin (439 aa).

An N-terminal signal peptide occupies residues 1–23 (MKLANWYWLSSAVLATYGFLVVA). N25 is a glycosylation site (N-linked (GlcNAc...) asparagine). The stretch at 73-165 (SRIEEVFKEV…GRLEKLNLVN (93 aa)) forms a coiled coil. The interval 103–126 (ADDNGDPGRNGLLLPSTGAPGEVG) is disordered. Residues N179, N235, N263, and N336 are each glycosylated (N-linked (GlcNAc...) asparagine). Positions 204–436 (PVQHLIYKDC…EAKMMIRPKH (233 aa)) constitute a Fibrinogen C-terminal domain. Residues C213 and C242 are joined by a disulfide bond. C371 and C384 are oxidised to a cystine.

As to quaternary structure, homotetramer; disulfide-linked. As to expression, constitutively expressed in cytotoxic T-cells.

The protein localises to the secreted. In terms of biological role, may play a role in physiologic lymphocyte functions at mucosal sites. This is Fibroleukin (FGL2) from Homo sapiens (Human).